The primary structure comprises 167 residues: Leukotoxin-activating lysine-acyltransferase LktC serotype A1 (167 aa).

Active-site residues include histidine 22 and aspartate 91.

This sequence belongs to the RTX toxin acyltransferase family.

The protein resides in the cytoplasm. The catalysed reaction is a fatty acyl-[ACP] + L-lysyl-[protein] = N(6)-(fatty acyl)-L-lysyl-[protein] + holo-[ACP] + H(+). In terms of biological role, involved in fatty acylation of the protoxin (LktA) at two internal lysine residues, thereby converting it to the active toxin. This is Leukotoxin-activating lysine-acyltransferase LktC serotype A1 (lktC) from Mannheimia haemolytica (Pasteurella haemolytica).